Here is a 419-residue protein sequence, read N- to C-terminus: UDP-N-acetylglucosamine 1-carboxyvinyltransferase (419 aa).

22–23 (KN) lines the phosphoenolpyruvate pocket. Residue arginine 91 participates in UDP-N-acetyl-alpha-D-glucosamine binding. The active-site Proton donor is the cysteine 115. Position 115 is a 2-(S-cysteinyl)pyruvic acid O-phosphothioketal (cysteine 115). UDP-N-acetyl-alpha-D-glucosamine contacts are provided by residues 120 to 124 (RPVDL), 160 to 163 (KVSV), aspartate 305, and valine 327.

This sequence belongs to the EPSP synthase family. MurA subfamily.

It localises to the cytoplasm. It catalyses the reaction phosphoenolpyruvate + UDP-N-acetyl-alpha-D-glucosamine = UDP-N-acetyl-3-O-(1-carboxyvinyl)-alpha-D-glucosamine + phosphate. The protein operates within cell wall biogenesis; peptidoglycan biosynthesis. Cell wall formation. Adds enolpyruvyl to UDP-N-acetylglucosamine. In Salmonella dublin (strain CT_02021853), this protein is UDP-N-acetylglucosamine 1-carboxyvinyltransferase.